The following is a 191-amino-acid chain: MSEELPPSEAPRPDEADAVDETRATGETRGAAQEPGASDADAWATACAEDLEAEKARRRAAYGPPPGSAAEELRRLVDTVADKLSGLQSPLLGQVAGPAAQQVVRQVVQQAKAAVEPVIERNPDLFDHLAAAGGELLAAYRSAVQNQERRWTTGDTAPKDPSDPRDLDERGTDGRDEGDGGTGPGQRIDLD.

Disordered stretches follow at residues 1–42 (MSEE…DADA) and 145–191 (QNQE…IDLD). 2 stretches are compositionally biased toward basic and acidic residues: residues 11–26 (PRPDEADAVDETRATG) and 147–178 (QERRWTTGDTAPKDPSDPRDLDERGTDGRDEG).

In terms of assembly, it may form a heterotetramer of two glucokinase subunits (glk) with two ORF2 proteins.

Its function is as follows. May be involved in glucose transport or metabolism. This is an uncharacterized protein from Streptomyces coelicolor (strain ATCC BAA-471 / A3(2) / M145).